We begin with the raw amino-acid sequence, 206 residues long: dCTP deaminase, dUMP-forming (206 aa).

DCTP is bound by residues 117–122, Asp135, 143–145, Gln163, Tyr177, Lys184, and Gln188; these read RSSFGR and TLE. Glu145 (proton donor/acceptor) is an active-site residue.

It belongs to the dCTP deaminase family. In terms of assembly, homotrimer.

The catalysed reaction is dCTP + 2 H2O = dUMP + NH4(+) + diphosphate. The protein operates within pyrimidine metabolism; dUMP biosynthesis; dUMP from dCTP: step 1/1. Functionally, bifunctional enzyme that catalyzes both the deamination of dCTP to dUTP and the hydrolysis of dUTP to dUMP without releasing the toxic dUTP intermediate. The chain is dCTP deaminase, dUMP-forming from Methanococcus maripaludis (strain C5 / ATCC BAA-1333).